A 314-amino-acid polypeptide reads, in one-letter code: Ficolin-2 (314 aa).

An N-terminal signal peptide occupies residues 1–17; the sequence is MALGSAALFVLTLTVHA. The region spanning 40–96 is the Collagen-like domain; the sequence is GCPGLPGAAGPKGEAGAKGDRGESGLPGIPGKEGPTGPKGNQGEKGIRGEKGDSGPS. The interval 49-101 is disordered; the sequence is GPKGEAGAKGDRGESGLPGIPGKEGPTGPKGNQGEKGIRGEKGDSGPSQSCAT. One can recognise a Fibrinogen C-terminal domain in the interval 97–314; it reads QSCATGPRTC…KVSEMKVRLI (218 aa). 2 disulfide bridges follow: C99-C127 and C106-C134. Residues D250, D252, S254, and S256 each coordinate Ca(2+). C258 and C271 form a disulfide bridge. An N-linked (GlcNAc...) asparagine glycan is attached at N301.

This sequence belongs to the ficolin lectin family. In terms of assembly, homotrimer. Interacts with elastin. Interacts with MASP1 and MASP2.

It is found in the secreted. In terms of biological role, may function in innate immunity through activation of the lectin complement pathway. Calcium-dependent and GlcNAc-binding lectin. The protein is Ficolin-2 (Fcn2) of Mus musculus (Mouse).